Consider the following 513-residue polypeptide: Histidine ammonia-lyase (513 aa).

Residues A144–G146 constitute a cross-link (5-imidazolinone (Ala-Gly)). Position 145 is a 2,3-didehydroalanine (Ser) (S145).

The protein belongs to the PAL/histidase family. Contains an active site 4-methylidene-imidazol-5-one (MIO), which is formed autocatalytically by cyclization and dehydration of residues Ala-Ser-Gly.

The protein localises to the cytoplasm. It catalyses the reaction L-histidine = trans-urocanate + NH4(+). The protein operates within amino-acid degradation; L-histidine degradation into L-glutamate; N-formimidoyl-L-glutamate from L-histidine: step 1/3. This is Histidine ammonia-lyase from Streptococcus pyogenes serotype M6 (strain ATCC BAA-946 / MGAS10394).